The chain runs to 2016 residues: Cell adhesion molecule Dscam1 (2016 aa).

The first 28 residues, 1–28 (MNMPNERLKWLMLFAAVALIACGSQTLA), serve as a signal peptide directing secretion. The Extracellular portion of the chain corresponds to 29 to 1618 (ANPPDADQKG…TIRIILSNLN (1590 aa)). Ig-like C2-type domains follow at residues 39–134 (PVFL…VHVR), 138–230 (AQYY…TRLS), 247–338 (PKIN…TVLT), 342–421 (PLSA…AELK), 428–522 (PPVI…AKLN), 527–613 (PYIR…LEVQ), 618–712 (PQVL…LQVN), 715–807 (PRWI…IMIS), and 812–904 (PEFT…ASIN). The N-linked (GlcNAc...) asparagine glycan is linked to Asn53. A disulfide bridge connects residues Cys61 and Cys117. Residues Asp144, Asn146, and Leu161 each contribute to the Zn(2+) site. Cystine bridges form between Cys160/Cys217, Cys160/Thr219, Cys160/Lys220, Cys269/Cys322, Pro270/Val323, Ala276/Gly329, Cys364/Cys405, Cys450/Cys506, Cys547/Cys596, Cys640/Cys694, Val641/Cys694, Val641/Ile695, and Cys736/Cys790. Residue Asn325 is glycosylated (N-linked (GlcNAc...) asparagine). 2 N-linked (GlcNAc...) asparagine glycosylation sites follow: Asn492 and Asn577. A glycan (N-linked (GlcNAc...) asparagine) is linked at Asn820. A disulfide bond links Cys833 and Cys890. Fibronectin type-III domains follow at residues 913–1007 (MPYA…TAEE), 1012–1116 (KPQN…TPSQ), 1117–1213 (PPSD…TEPD), and 1217–1310 (APTD…PSDQ). 3 N-linked (GlcNAc...) asparagine glycosylation sites follow: Asn1022, Asn1055, and Asn1186. Positions 1312–1394 (PAKIASFDDT…ENSIAKDSIT (83 aa)) constitute an Ig-like C2-type 10 domain. A disulfide bridge connects residues Cys1334 and Cys1382. 2 consecutive Fibronectin type-III domains span residues 1402-1495 (PPQS…TKGQ) and 1499-1594 (LPEK…TGGT). Residues 1619 to 1639 (LVVPVVAALLVIIIAIIVICI) form a helical membrane-spanning segment. The Cytoplasmic segment spans residues 1640-2016 (LRSKGNHHKD…GFTAYDTMAV (377 aa)). The PXXP motif 1; SH3-binding signature appears at 1685-1688 (PPVP). Residues 1688-1719 (PGSNYNTCDRIKRGRGGLRSNHSTWDPRRNPN) form a disordered region. The PXXP motif 2; SH3-binding signature appears at 1727–1730 (PPVP). Disordered regions lie at residues 1787–1846 (GHAG…DDPA) and 1862–2016 (SQGG…TMAV). Residues 1826–1836 (KNSQGGQSSIY) show a composition bias toward polar residues. The YXXP motif 1; potential SH2-binding signature appears at 1842-1845 (YDDP). Residues 1875 to 1878 (YDDP) carry the YXXP motif 2; potential SH2-binding motif. Positions 1897 to 1918 (GQPYDHYGSRGSMGRRSIGSAR) are enriched in low complexity. A Polyproline tract (probable SH3-binding) motif is present at residues 1925 to 1932 (PEPPPPPP). Basic and acidic residues-rich tracts occupy residues 1944–1962 (DSKESNEISEAECDRDHGP) and 1974–1993 (QPKDQRTTEEMRKLIERNET). The span at 1994 to 2004 (GPKQLQLQQAN) shows a compositional bias: polar residues.

In terms of assembly, homodimer (via extracellular region); alternative splicing produces a potential 19,008 different ectodomains and the majority of these show strong isoform-specific homodimerization. Interacts (via cytoplasmic domain) with dock/dreadlocks (via SH2 and SH3 domains); the interaction is direct and may require Dscam1 to be phosphorylated. In terms of processing, phosphorylated on tyrosine residues in the intracellular domain. Tyrosine protein kinase Src42A and possibly Src64B are involved in this phosphorylation. Glycosylation on Asn-53 and Asn-325 is involved in stabilizing dimerization. Post-translationally, proteolytically processed, probably to generate a secreted form. In terms of tissue distribution, secreted into the hemolymph (at protein level). Expressed in brain and eye-antennal imaginal disks, including R3/R4 and R7 photoreceptor cells. Individual R3/R4 cells express between 14 and 50 randomly generated mRNAs encoding distinct isoforms.

It is found in the cell membrane. The protein resides in the cell projection. It localises to the neuron projection. Its subcellular location is the axon. The protein localises to the perikaryon. It is found in the dendrite. The protein resides in the secreted. In terms of biological role, cell surface receptor involved in guidance and targeting of growing nerve axons. Required during Bolwig's organ differentiation for accurate and efficient targeting of photoreceptor neuron axons to their synaptic targets in the brain via the P2 intermediate target neuron. Involved in isoneural self-avoidance during dendrite arborization but not in heteroneural recognition and repulsion during tiling by related neurons of the same class. Involved in regulating axon bifurcation and divergent extension in the developing mushroom body. Essential for axon arborisation in ellipsoid body. Exhibits an extraordinary level of molecular diversity resulting from alternative splicing. Isoforms differing in their ectodomain makeup show a high degree of functional redundancy while isoforms with different transmembrane domains are involved in different neuronal morphogenetic processes and are differentially targeted to dendrites or axons. The vast majority of isoforms exhibit strong isoform-specific homophilic binding. Individual cells express a distinct randomly generated repertoire of isoforms. Cell surfaces bearing identical repertoires of Dscam1 isoforms, such as those from the same cell, trigger recognition and avoidance. A subset of isoforms is expressed in fat body cells and hemocytes, cells that are part of the insect immune response, and these isoforms are secreted into the hemolymph. The secreted form comprising the ectodomain can bind to bacteria, such as Escherichia coli, and may act as an opsonin enhancing their phagocytosis by hemocytes. The sequence is that of Cell adhesion molecule Dscam1 from Drosophila melanogaster (Fruit fly).